Here is a 140-residue protein sequence, read N- to C-terminus: Ribosome maturation factor RimP (140 aa).

Belongs to the RimP family.

Its subcellular location is the cytoplasm. Required for maturation of 30S ribosomal subunits. The chain is Ribosome maturation factor RimP from Campylobacter fetus subsp. fetus (strain 82-40).